The chain runs to 476 residues: Bifunctional protein HldE (476 aa).

The segment at 1–318 is ribokinase; that stretch reads MKVTLPDFRR…ENAIRGRAET (318 aa). 195 to 198 is a binding site for ATP; the sequence is NLSE. The active site involves aspartate 264. The interval 344 to 476 is cytidylyltransferase; that stretch reads MTNGIFDILH…IIQSIKNGRG (133 aa).

In the N-terminal section; belongs to the carbohydrate kinase PfkB family. This sequence in the C-terminal section; belongs to the cytidylyltransferase family. As to quaternary structure, homodimer.

It carries out the reaction D-glycero-beta-D-manno-heptose 7-phosphate + ATP = D-glycero-beta-D-manno-heptose 1,7-bisphosphate + ADP + H(+). It catalyses the reaction D-glycero-beta-D-manno-heptose 1-phosphate + ATP + H(+) = ADP-D-glycero-beta-D-manno-heptose + diphosphate. It participates in nucleotide-sugar biosynthesis; ADP-L-glycero-beta-D-manno-heptose biosynthesis; ADP-L-glycero-beta-D-manno-heptose from D-glycero-beta-D-manno-heptose 7-phosphate: step 1/4. It functions in the pathway nucleotide-sugar biosynthesis; ADP-L-glycero-beta-D-manno-heptose biosynthesis; ADP-L-glycero-beta-D-manno-heptose from D-glycero-beta-D-manno-heptose 7-phosphate: step 3/4. Its function is as follows. Catalyzes the phosphorylation of D-glycero-D-manno-heptose 7-phosphate at the C-1 position to selectively form D-glycero-beta-D-manno-heptose-1,7-bisphosphate. In terms of biological role, catalyzes the ADP transfer from ATP to D-glycero-beta-D-manno-heptose 1-phosphate, yielding ADP-D-glycero-beta-D-manno-heptose. The sequence is that of Bifunctional protein HldE from Yersinia pseudotuberculosis serotype O:1b (strain IP 31758).